A 656-amino-acid polypeptide reads, in one-letter code: Pheromone-regulated membrane protein 2 (656 aa).

The next 4 helical transmembrane spans lie at 16 to 36 (FFSC…ILTI), 320 to 340 (IIFT…ERIL), 422 to 442 (WIIS…LIHW), and 634 to 654 (WGLL…FIIL).

It is found in the membrane. The sequence is that of Pheromone-regulated membrane protein 2 (PRM2) from Saccharomyces cerevisiae (strain ATCC 204508 / S288c) (Baker's yeast).